A 302-amino-acid chain; its full sequence is DDRGK domain-containing protein 1 (302 aa).

Topologically, residues M1 to G5 are lumenal. Residues G6 to W26 traverse the membrane as a helical segment. Residues R27–L302 lie on the Cytoplasmic side of the membrane. Disordered stretches follow at residues L36–R151 and D279–L302. Over residues V79 to Q91 the composition is skewed to acidic residues. The segment covering K103–R151 has biased composition (basic and acidic residues).

This sequence belongs to the DDRGK1 family.

Its subcellular location is the endoplasmic reticulum membrane. In terms of biological role, substrate adapter for ufmylation, the covalent attachment of the ubiquitin-like modifier UFM1 to substrate proteins. This chain is DDRGK domain-containing protein 1, found in Oryza sativa subsp. japonica (Rice).